Here is a 238-residue protein sequence, read N- to C-terminus: Probable transcriptional regulatory protein SPH_2064 (238 aa).

It belongs to the TACO1 family. YeeN subfamily.

The protein localises to the cytoplasm. The chain is Probable transcriptional regulatory protein SPH_2064 from Streptococcus pneumoniae (strain Hungary19A-6).